Here is a 1216-residue protein sequence, read N- to C-terminus: DNA-directed RNA polymerase subunit beta (1216 aa).

A disordered region spans residues 1185–1216; the sequence is EEKQELPSQEYESLNLDQELKTASENVSESEF. Over residues 1190 to 1216 the composition is skewed to polar residues; the sequence is LPSQEYESLNLDQELKTASENVSESEF.

It belongs to the RNA polymerase beta chain family. The RNAP catalytic core consists of 2 alpha, 1 beta, 1 beta' and 1 omega subunit. When a sigma factor is associated with the core the holoenzyme is formed, which can initiate transcription.

It carries out the reaction RNA(n) + a ribonucleoside 5'-triphosphate = RNA(n+1) + diphosphate. DNA-dependent RNA polymerase catalyzes the transcription of DNA into RNA using the four ribonucleoside triphosphates as substrates. The sequence is that of DNA-directed RNA polymerase subunit beta from Mycoplasmopsis pulmonis (strain UAB CTIP) (Mycoplasma pulmonis).